The following is a 363-amino-acid chain: MALYIGVMSGTSLDGLDIALIEQSSAINLVATHYIPMPDTLRAELLGLCAGGPDEIARSAIAQQNWVKLAAQGIHTLLEQQQLKPEAIRAIGSHGQTIRHEPARGFTVQIGNPALLTELTGITVVSDFRSRDVAAGGQGAPLVPAFHEALFEERTGNRAVLNVGGFSNLSLIEPNKPVAGFDCGPGNVLMDAWIHQQRGENYDRNGQWAASGKVEPTLLKALLSDPFFVTQGPKSTGREVFNLPWLEQQLSCLPGFAAENVQATLLELTALTIVESLQSAQSNTEELLVCGGGAHNVTLMKRLADLLPNAKVASTATHGVDPDWVEAMAFAWLAHCCLEGIAANRPSVTGAKGLRVLGAIYPN.

Residue Gly-10–Asp-17 participates in ATP binding.

Belongs to the anhydro-N-acetylmuramic acid kinase family.

The enzyme catalyses 1,6-anhydro-N-acetyl-beta-muramate + ATP + H2O = N-acetyl-D-muramate 6-phosphate + ADP + H(+). The protein operates within amino-sugar metabolism; 1,6-anhydro-N-acetylmuramate degradation. It participates in cell wall biogenesis; peptidoglycan recycling. Its function is as follows. Catalyzes the specific phosphorylation of 1,6-anhydro-N-acetylmuramic acid (anhMurNAc) with the simultaneous cleavage of the 1,6-anhydro ring, generating MurNAc-6-P. Is required for the utilization of anhMurNAc either imported from the medium or derived from its own cell wall murein, and thus plays a role in cell wall recycling. The protein is Anhydro-N-acetylmuramic acid kinase of Pseudomonas fluorescens (strain Pf0-1).